Consider the following 184-residue polypeptide: MEEYKALLDEKMGRVVLSLESEYKSLRTGRVNSALFDKVFVDYYGEKTPLTRVANISVPEARLIVIQPWDRSLLSKIEQAILNSDLSMNPSSDGSVLRIKVPVLTIERRKEIVKQAKKIAEDHKIATRNIRHELNNKAKKQEKDSQITEDDLRRILDDIQRDTNFYIKKIDGIFDLKAKEIMEV.

This sequence belongs to the RRF family.

It localises to the cytoplasm. Functionally, responsible for the release of ribosomes from messenger RNA at the termination of protein biosynthesis. May increase the efficiency of translation by recycling ribosomes from one round of translation to another. The chain is Ribosome-recycling factor from Borrelia recurrentis (strain A1).